Here is a 157-residue protein sequence, read N- to C-terminus: Transcription elongation factor GreA (157 aa).

Residues 12–74 adopt a coiled-coil conformation; sequence LKKLEEELEY…TLEAMLKNAK (63 aa).

It belongs to the GreA/GreB family.

Its function is as follows. Necessary for efficient RNA polymerase transcription elongation past template-encoded arresting sites. The arresting sites in DNA have the property of trapping a certain fraction of elongating RNA polymerases that pass through, resulting in locked ternary complexes. Cleavage of the nascent transcript by cleavage factors such as GreA or GreB allows the resumption of elongation from the new 3'terminus. GreA releases sequences of 2 to 3 nucleotides. The sequence is that of Transcription elongation factor GreA from Thermoanaerobacter pseudethanolicus (strain ATCC 33223 / 39E) (Clostridium thermohydrosulfuricum).